The sequence spans 401 residues: Large ribosomal subunit protein uL3 (401 aa).

The tract at residues 1 to 22 is disordered; that stretch reads MSHRKFSAPRHGHMGFTPKKRS.

It belongs to the universal ribosomal protein uL3 family.

It localises to the cytoplasm. The L3 protein is a component of the large subunit of cytoplasmic ribosomes. This chain is Large ribosomal subunit protein uL3 (rpl-3), found in Caenorhabditis elegans.